Reading from the N-terminus, the 229-residue chain is Cytochrome c oxidase subunit 2 (229 aa).

Over 1–26 (MSTWANLGLQDSASPLMEQLIFFHDH) the chain is Mitochondrial intermembrane. Residues 27–48 (ALLILVMITVLVGYLMFMLFFN) traverse the membrane as a helical segment. The Mitochondrial matrix segment spans residues 49-62 (SYVNRFLLHGQLIE). Residues 63 to 82 (MIWTILPAIILLFIAMPSLR) traverse the membrane as a helical segment. The Mitochondrial intermembrane portion of the chain corresponds to 83–229 (LLYLLDEINE…IKWISNSVNS (147 aa)). His-161, Cys-196, Glu-198, Cys-200, His-204, and Met-207 together coordinate Cu cation. Mg(2+) is bound at residue Glu-198.

This sequence belongs to the cytochrome c oxidase subunit 2 family. As to quaternary structure, component of the cytochrome c oxidase (complex IV, CIV), a multisubunit enzyme composed of a catalytic core of 3 subunits and several supernumerary subunits. The complex exists as a monomer or a dimer and forms supercomplexes (SCs) in the inner mitochondrial membrane with ubiquinol-cytochrome c oxidoreductase (cytochrome b-c1 complex, complex III, CIII). The cofactor is Cu cation.

The protein resides in the mitochondrion inner membrane. It catalyses the reaction 4 Fe(II)-[cytochrome c] + O2 + 8 H(+)(in) = 4 Fe(III)-[cytochrome c] + 2 H2O + 4 H(+)(out). In terms of biological role, component of the cytochrome c oxidase, the last enzyme in the mitochondrial electron transport chain which drives oxidative phosphorylation. The respiratory chain contains 3 multisubunit complexes succinate dehydrogenase (complex II, CII), ubiquinol-cytochrome c oxidoreductase (cytochrome b-c1 complex, complex III, CIII) and cytochrome c oxidase (complex IV, CIV), that cooperate to transfer electrons derived from NADH and succinate to molecular oxygen, creating an electrochemical gradient over the inner membrane that drives transmembrane transport and the ATP synthase. Cytochrome c oxidase is the component of the respiratory chain that catalyzes the reduction of oxygen to water. Electrons originating from reduced cytochrome c in the intermembrane space (IMS) are transferred via the dinuclear copper A center (CU(A)) of subunit 2 and heme A of subunit 1 to the active site in subunit 1, a binuclear center (BNC) formed by heme A3 and copper B (CU(B)). The BNC reduces molecular oxygen to 2 water molecules using 4 electrons from cytochrome c in the IMS and 4 protons from the mitochondrial matrix. The protein is Cytochrome c oxidase subunit 2 (mt:CoII) of Drosophila affinis (Fruit fly).